Here is a 626-residue protein sequence, read N- to C-terminus: FAD-binding monooxygenase moxY (626 aa).

The segment covering Met1–Ser23 has biased composition (low complexity). Positions Met1 to Thr47 are disordered. The segment covering Val31–Thr47 has biased composition (polar residues). FAD contacts are provided by residues Thr96 to Glu99, Asp108 to Ile109, and Tyr114. Residue Gly106–Asp108 coordinates NADP(+). Residues Ser243 to Gln249 and Arg266 to Thr267 each bind NADP(+).

It belongs to the FAD-binding monooxygenase family. FAD is required as a cofactor.

Its pathway is mycotoxin biosynthesis. Its function is as follows. FAD-binding monooxygenase; part of the fragmented gene cluster that mediates the biosynthesis of dothistromin (DOTH), a polyketide toxin very similar in structure to the aflatoxin precursor, versicolorin B. The first step of the pathway is the conversion of acetate to norsolorinic acid (NOR) and requires the fatty acid synthase subunits hexA and hexB, as well as the polyketide synthase pksA. PksA combines a hexanoyl starter unit and 7 malonyl-CoA extender units to synthesize the precursor NOR. The hexanoyl starter unit is provided to the acyl-carrier protein (ACP) domain by the fungal fatty acid synthase hexA/hexB. The second step is the conversion of NOR to averantin (AVN) and requires the norsolorinic acid ketoreductase nor1, which catalyzes the dehydration of norsolorinic acid to form (1'S)-averantin. The cytochrome P450 monooxygenase avnA then catalyzes the hydroxylation of AVN to 5'hydroxyaverantin (HAVN). The next step is performed by adhA that transforms HAVN to averufin (AVF). Averufin might then be converted to hydroxyversicolorone by cypX and avfA. Hydroxyversicolorone is further converted versiconal hemiacetal acetate (VHA) by moxY. VHA is then the substrate for the versiconal hemiacetal acetate esterase est1 to yield versiconal (VAL). Versicolorin B synthase vbsA then converts VAL to versicolorin B (VERB) by closing the bisfuran ring. Then, the activity of the versicolorin B desaturase verB leads to versicolorin A (VERA). DotB, a predicted chloroperoxidase, may perform epoxidation of the A-ring of VERA. Alternatively, a cytochrome P450, such as cypX or avnA could catalyze this step. It is also possible that another, uncharacterized, cytochrome P450 enzyme is responsible for this step. Opening of the epoxide could potentially be achieved by the epoxide hydrolase epoA. However, epoA seems not to be required for DOTH biosynthesis, but other epoxide hydrolases may have the ability to complement this hydrolysis. Alternatively, opening of the epoxide ring could be achieved non-enzymatically. The next step is the deoxygenation of ring A to yield the 5,8-dihydroxyanthraquinone which is most likely catalyzed by the NADPH dehydrogenase encoded by ver1. The last stages of DOTH biosynthesis are proposed to involve hydroxylation of the bisfuran. OrdB and norB might have oxidative roles here. An alternative possibility is that cytochrome P450 monoogenases such as avnA and cypX might perform these steps in addition to previously proposed steps. This is FAD-binding monooxygenase moxY from Dothistroma septosporum (Red band needle blight fungus).